The sequence spans 305 residues: Ornithine carbamoyltransferase, anabolic (305 aa).

Residues 53–56, Gln-80, Arg-104, and 131–134 contribute to the carbamoyl phosphate site; these read STRT and HPCQ. Residues Asn-162, Asp-219, and 223-224 contribute to the L-ornithine site; that span reads SM. Residues 259–260 and Arg-287 contribute to the carbamoyl phosphate site; that span reads CL.

The protein belongs to the aspartate/ornithine carbamoyltransferase superfamily. OTCase family. Homotrimer.

It localises to the cytoplasm. The enzyme catalyses carbamoyl phosphate + L-ornithine = L-citrulline + phosphate + H(+). It participates in amino-acid biosynthesis; L-arginine biosynthesis; L-arginine from L-ornithine and carbamoyl phosphate: step 1/3. Reversibly catalyzes the transfer of the carbamoyl group from carbamoyl phosphate (CP) to the N(epsilon) atom of ornithine (ORN) to produce L-citrulline, which is a substrate for argininosuccinate synthetase (ArgG) involved in the final step in arginine biosynthesis. In Pseudomonas aeruginosa (strain ATCC 15692 / DSM 22644 / CIP 104116 / JCM 14847 / LMG 12228 / 1C / PRS 101 / PAO1), this protein is Ornithine carbamoyltransferase, anabolic.